A 435-amino-acid polypeptide reads, in one-letter code: ATP-dependent RNA helicase RhlB (435 aa).

Positions 9–37 (QKFADFSLQTEIKTALNESGFEYCTPIQA) match the Q motif motif. The Helicase ATP-binding domain occupies 40-219 (LPILLQKKDI…YDHMNEPEKV (180 aa)). Position 53-60 (53-60 (AQTGTGKT)) interacts with ATP. The short motif at 165 to 168 (DEAD) is the DEAD box element. The region spanning 243-390 (KMRLLLTLLE…VTNYDSEALL (148 aa)) is the Helicase C-terminal domain. The disordered stretch occupies residues 395–435 (APVRVHRKHNSRPQGRSGSGGKPRSGNRNAPRRHDKTRRHS). The span at 424-435 (APRRHDKTRRHS) shows a compositional bias: basic residues.

It belongs to the DEAD box helicase family. RhlB subfamily. Component of the RNA degradosome, which is a multiprotein complex involved in RNA processing and mRNA degradation.

It localises to the cytoplasm. It catalyses the reaction ATP + H2O = ADP + phosphate + H(+). Functionally, DEAD-box RNA helicase involved in RNA degradation. Has RNA-dependent ATPase activity and unwinds double-stranded RNA. This chain is ATP-dependent RNA helicase RhlB, found in Shewanella sediminis (strain HAW-EB3).